The sequence spans 1356 residues: Collagen alpha-2(I) chain (1356 aa).

Positions 1 to 22 (MLSFVDNRILLLLAVTSLLASC) are cleaved as a signal peptide. The disordered stretch occupies residues 22-1112 (CQSGGLKGPR…DQSGGYDEYR (1091 aa)). Pyrrolidone carboxylic acid occurs at positions 23 and 73. Residues 23 to 72 (QSGGLKGPRGAKGPRGDRGPQGPNGRDGKAGLPGIAGPPGPPGLGGNFAA) constitute a propeptide, N-terminal propeptide. Residues 76 to 88 (GGKGSDPGPGPMG) show a composition bias toward gly residues. The residue at position 78 (Lys-78) is an Allysine. Lys-171 carries the post-translational modification 5-hydroxylysine; alternate. A glycan (O-linked (Gal...) hydroxylysine; alternate) is linked at Lys-171. Low complexity predominate over residues 219 to 248 (AGPAGPAGARGADGSTGPAGPAGPLGAAGP). A compositionally biased stretch (gly residues) spans 259–280 (GEIGGAGSNGPSGPQGGRGEPG). Residues 281–315 (INGAVGPVGPVGNPGNNGINGAKGAAGLPGVAGAP) are compositionally biased toward low complexity. Over residues 317–327 (FPGPRGGPGPQ) the composition is skewed to pro residues. Gly residues-rich tracts occupy residues 334 to 343 (GARGLGGDPG), 391 to 412 (GARGGAGTRGLPGLEGRGGPIG), 418 to 427 (GATGPGGIRG), and 448 to 457 (GNSGQGGPPG). Low complexity predominate over residues 479–489 (PRGQPGNIGFP). Residues 511-520 (GLRGGPGADG) are compositionally biased toward gly residues. Composition is skewed to low complexity over residues 521-564 (NNGA…AGKA) and 587-603 (NSGPAGSAGSQGAIGAR). Gly residues-rich tracts occupy residues 610–619 (GPDGGKGEPG) and 628–646 (GHQGPGGMPGERGAGGTPG). Positions 648-659 (KGEKGEGGHRGL) are enriched in basic and acidic residues. Low complexity predominate over residues 716–731 (LPGFAGPPGSDGQSGP). Gly residues predominate over residues 736-745 (GPAGGKGDVG). Composition is skewed to low complexity over residues 746–764 (PAGPAGPSGQSGPSGASGP) and 776–786 (PSGLTGFPGAA). A compositionally biased stretch (gly residues) spans 787–796 (GRVGGPGPAG). Low complexity predominate over residues 797-809 (IAGPPGSAGPAGK). Residues 817–826 (GDPGPGGPQG) are compositionally biased toward gly residues. Residues 827–858 (EQGVVGPAGISGDKGPSGESGPPGAPGTAGPQ) are compositionally biased toward low complexity. Positions 877–886 (GLPGGPGAVG) are enriched in gly residues. The segment covering 888–903 (PGRLGPAGASGPRGPA) has biased composition (low complexity). Positions 976–985 (GPTGNGGPVG) are enriched in gly residues. Basic and acidic residues predominate over residues 999–1013 (RGEKGGAGEKGDRGM). Positions 1083 to 1095 (AGPPGSPGLPGPA) are enriched in pro residues. Residues 1114 to 1356 (DQPSFRAKDY…GLDIGPVCFK (243 aa)) constitute a propeptide, C-terminal propeptide. The Fibrillar collagen NC1 domain occupies 1123 to 1356 (YEVDATIKSL…GLDIGPVCFK (234 aa)). 3 disulfide bridges follow: Cys-1153-Cys-1185, Cys-1193-Cys-1354, and Cys-1262-Cys-1307. Residues Asp-1171, Asn-1173, Gln-1174, Cys-1176, and Asp-1179 each coordinate Ca(2+). Asn-1257 is a glycosylation site (N-linked (GlcNAc...) asparagine).

The protein belongs to the fibrillar collagen family. Trimers of one alpha 2(I) and two alpha 1(I) chains. In terms of processing, prolines at the third position of the tripeptide repeating unit (G-X-Y) are hydroxylated in some or all of the chains. As to expression, forms the fibrils of tendon, ligaments and bones. In bones the fibrils are mineralized with calcium hydroxyapatite.

The protein localises to the secreted. It is found in the extracellular space. It localises to the extracellular matrix. Functionally, type I collagen is a member of group I collagen (fibrillar forming collagen). The polypeptide is Collagen alpha-2(I) chain (col1a2) (Oncorhynchus mykiss (Rainbow trout)).